Consider the following 399-residue polypeptide: Elongation factor Tu (399 aa).

The tr-type G domain maps to 10 to 209; the sequence is KPHVNIGTIG…EVDAYIPTPV (200 aa). The segment at 19–26 is G1; the sequence is GHVDHGKT. 19-26 contributes to the GTP binding site; sequence GHVDHGKT. A Mg(2+)-binding site is contributed by threonine 26. Residues 60-64 are G2; the sequence is GITIA. The segment at 81–84 is G3; the sequence is DCPG. Residues 81–85 and 136–139 each bind GTP; these read DCPGH and NKQD. The tract at residues 136–139 is G4; that stretch reads NKQD. A G5 region spans residues 174–176; it reads SAL.

This sequence belongs to the TRAFAC class translation factor GTPase superfamily. Classic translation factor GTPase family. EF-Tu/EF-1A subfamily. As to quaternary structure, monomer.

It localises to the cytoplasm. The enzyme catalyses GTP + H2O = GDP + phosphate + H(+). GTP hydrolase that promotes the GTP-dependent binding of aminoacyl-tRNA to the A-site of ribosomes during protein biosynthesis. The sequence is that of Elongation factor Tu from Helicobacter acinonychis (strain Sheeba).